Here is a 460-residue protein sequence, read N- to C-terminus: Interleukin-1 receptor-associated kinase 4 (460 aa).

Met-1 carries the post-translational modification N-acetylmethionine. The Death domain occupies 20–104 (RKLSDFIDPQ…APASLLLPDA (85 aa)). Position 34 is an N6-acetyllysine (Lys-34). The region spanning 186-454 (SVGGNKMGEG…PDIKKVQQLL (269 aa)) is the Protein kinase domain. Residues 192 to 200 (MGEGGFGVV) and Lys-213 each bind ATP. Asp-311 functions as the Proton acceptor in the catalytic mechanism. Residues 313–316 (KSAN) and Asp-329 each bind ATP. Thr-342 and Thr-345 each carry phosphothreonine. Ser-346 carries the phosphoserine modification.

This sequence belongs to the protein kinase superfamily. TKL Ser/Thr protein kinase family. Pelle subfamily. As to quaternary structure, associates with MYD88 and IRAK2 to form a ternary complex called the Myddosome. Once phosphorylated, IRAK4 dissociates from the receptor complex and then associates with the TNF receptor-associated factor 6 (TRAF6), IRAK1, and PELI1; this intermediate complex is required for subsequent NF-kappa-B activation. Direct binding of SMAD6 to PELI1 prevents complex formation and hence negatively regulates IL1R-TLR signaling and eventually NF-kappa-B-mediated gene expression. Interacts with IL1RL1. Interacts (when phosphorylated) with IRAK1. May interact (when phosphorylated) with IRAK3. The cofactor is Mg(2+). Phosphorylated.

The protein localises to the cytoplasm. It carries out the reaction L-seryl-[protein] + ATP = O-phospho-L-seryl-[protein] + ADP + H(+). The enzyme catalyses L-threonyl-[protein] + ATP = O-phospho-L-threonyl-[protein] + ADP + H(+). Functionally, serine/threonine-protein kinase that plays a critical role in initiating innate immune response against foreign pathogens. Involved in Toll-like receptor (TLR) and IL-1R signaling pathways. Is rapidly recruited by MYD88 to the receptor-signaling complex upon TLR activation to form the Myddosome together with IRAK2. Phosphorylates initially IRAK1, thus stimulating the kinase activity and intensive autophosphorylation of IRAK1. Phosphorylates E3 ubiquitin ligases Pellino proteins (PELI1, PELI2 and PELI3) to promote pellino-mediated polyubiquitination of IRAK1. Then, the ubiquitin-binding domain of IKBKG/NEMO binds to polyubiquitinated IRAK1 bringing together the IRAK1-MAP3K7/TAK1-TRAF6 complex and the NEMO-IKKA-IKKB complex. In turn, MAP3K7/TAK1 activates IKKs (CHUK/IKKA and IKBKB/IKKB) leading to NF-kappa-B nuclear translocation and activation. Alternatively, phosphorylates TIRAP to promote its ubiquitination and subsequent degradation. Phosphorylates NCF1 and regulates NADPH oxidase activation after LPS stimulation suggesting a similar mechanism during microbial infections. The sequence is that of Interleukin-1 receptor-associated kinase 4 (IRAK4) from Homo sapiens (Human).